The primary structure comprises 486 residues: Glutamyl-tRNA(Gln) amidotransferase subunit A (486 aa).

Residues Lys-76 and Ser-151 each act as charge relay system in the active site. The active-site Acyl-ester intermediate is the Ser-175.

This sequence belongs to the amidase family. GatA subfamily. In terms of assembly, heterotrimer of A, B and C subunits.

The catalysed reaction is L-glutamyl-tRNA(Gln) + L-glutamine + ATP + H2O = L-glutaminyl-tRNA(Gln) + L-glutamate + ADP + phosphate + H(+). Functionally, allows the formation of correctly charged Gln-tRNA(Gln) through the transamidation of misacylated Glu-tRNA(Gln) in organisms which lack glutaminyl-tRNA synthetase. The reaction takes place in the presence of glutamine and ATP through an activated gamma-phospho-Glu-tRNA(Gln). The sequence is that of Glutamyl-tRNA(Gln) amidotransferase subunit A from Chromohalobacter salexigens (strain ATCC BAA-138 / DSM 3043 / CIP 106854 / NCIMB 13768 / 1H11).